Here is a 390-residue protein sequence, read N- to C-terminus: Oxygen-dependent coproporphyrinogen-III oxidase (390 aa).

The segment at 131–140 (VLQDGDVFEK) is important for dimerization. S181 serves as a coordination point for substrate. H195 serves as the catalytic Proton donor. Residues 197-199 (NYR) and 348-353 (GARYES) each bind substrate. Residues 329–365 (YVEFNLIYDRGTKFGLYTPGARYESILMSLPLHARWE) are important for dimerization.

Belongs to the aerobic coproporphyrinogen-III oxidase family. As to quaternary structure, homodimer.

It carries out the reaction coproporphyrinogen III + O2 + 2 H(+) = protoporphyrinogen IX + 2 CO2 + 2 H2O. The protein operates within porphyrin-containing compound metabolism; protoporphyrin-IX biosynthesis; protoporphyrinogen-IX from coproporphyrinogen-III (O2 route): step 1/1. Its function is as follows. Involved in the heme biosynthesis. Catalyzes the aerobic oxidative decarboxylation of propionate groups of rings A and B of coproporphyrinogen-III to yield the vinyl groups in protoporphyrinogen-IX. The protein is Oxygen-dependent coproporphyrinogen-III oxidase (Coprox) of Drosophila melanogaster (Fruit fly).